A 427-amino-acid polypeptide reads, in one-letter code: Glutamate-1-semialdehyde 2,1-aminomutase (427 aa).

Lys265 carries the N6-(pyridoxal phosphate)lysine modification.

The protein belongs to the class-III pyridoxal-phosphate-dependent aminotransferase family. HemL subfamily. As to quaternary structure, homodimer. Requires pyridoxal 5'-phosphate as cofactor.

The protein localises to the cytoplasm. It catalyses the reaction (S)-4-amino-5-oxopentanoate = 5-aminolevulinate. The protein operates within porphyrin-containing compound metabolism; protoporphyrin-IX biosynthesis; 5-aminolevulinate from L-glutamyl-tRNA(Glu): step 2/2. In Photorhabdus laumondii subsp. laumondii (strain DSM 15139 / CIP 105565 / TT01) (Photorhabdus luminescens subsp. laumondii), this protein is Glutamate-1-semialdehyde 2,1-aminomutase.